The primary structure comprises 170 residues: Cytochrome b6-f complex subunit 4 (170 aa).

3 consecutive transmembrane segments (helical) span residues 36–56, 95–115, and 131–151; these read LLYIFPVVILGTIACNVGLAV, LLGVLLMVSVPAGLLTVPFLE, and TVFLIGTAVALWLGIGATLPI.

This sequence belongs to the cytochrome b family. PetD subfamily. As to quaternary structure, the 4 large subunits of the cytochrome b6-f complex are cytochrome b6, subunit IV (17 kDa polypeptide, petD), cytochrome f and the Rieske protein, while the 4 small subunits are petG, petL, petM and petN. The complex functions as a dimer.

Its subcellular location is the plastid. The protein resides in the chloroplast thylakoid membrane. In terms of biological role, component of the cytochrome b6-f complex, which mediates electron transfer between photosystem II (PSII) and photosystem I (PSI), cyclic electron flow around PSI, and state transitions. In Nymphaea alba (White water-lily), this protein is Cytochrome b6-f complex subunit 4.